Here is a 569-residue protein sequence, read N- to C-terminus: Aspartate--tRNA ligase, cytoplasmic 2 (569 aa).

The segment at 1–23 (MSEENNHKEKSKNEIKKEKKKIE) is disordered. The segment at 292-295 (QFYR) is aspartate. Residue R314 coordinates L-aspartate. Residues 314 to 316 (RTD) and 322 to 324 (RHL) each bind ATP. The L-aspartate site is built by S475 and R479. 540–543 (GLER) is an ATP binding site.

Belongs to the class-II aminoacyl-tRNA synthetase family. Type 2 subfamily.

The protein localises to the cytoplasm. The enzyme catalyses tRNA(Asp) + L-aspartate + ATP = L-aspartyl-tRNA(Asp) + AMP + diphosphate. This is Aspartate--tRNA ligase, cytoplasmic 2 (aspS2) from Dictyostelium discoideum (Social amoeba).